Here is a 218-residue protein sequence, read N- to C-terminus: Glutathione S-transferase Mu 3 (218 aa).

The GST N-terminal domain occupies 2–88 (PMTLGYWNTR…YLGRKHNLCG (87 aa)). Glutathione contacts are provided by residues 7-8 (YW), 46-50 (WLSEK), and 59-60 (NL). A Glycyl lysine isopeptide (Lys-Gly) (interchain with G-Cter in SUMO2) cross-link involves residue Lys50. A Glycyl lysine isopeptide (Lys-Gly) (interchain with G-Cter in SUMO2) cross-link involves residue Lys69. Residue 72–73 (QS) participates in glutathione binding. The 119-residue stretch at 90 to 208 (TEEERIRVDT…KSSRFLPRPV (119 aa)) folds into the GST C-terminal domain.

This sequence belongs to the GST superfamily. Mu family. As to quaternary structure, homodimer.

It is found in the cytoplasm. The enzyme catalyses RX + glutathione = an S-substituted glutathione + a halide anion + H(+). Its function is as follows. Conjugation of reduced glutathione to a wide number of exogenous and endogenous hydrophobic electrophiles. In Mus musculus (Mouse), this protein is Glutathione S-transferase Mu 3 (Gstm3).